The following is a 209-amino-acid chain: Large ribosomal subunit protein uL3 (209 aa).

The interval 130-162 (RGPMTHGSKFKRAPGSMGASSDPSRTFKNKRMP) is disordered.

It belongs to the universal ribosomal protein uL3 family. Part of the 50S ribosomal subunit. Forms a cluster with proteins L14 and L19.

Functionally, one of the primary rRNA binding proteins, it binds directly near the 3'-end of the 23S rRNA, where it nucleates assembly of the 50S subunit. The chain is Large ribosomal subunit protein uL3 from Clostridium botulinum (strain Alaska E43 / Type E3).